We begin with the raw amino-acid sequence, 182 residues long: Oligoribonuclease (182 aa).

One can recognise an Exonuclease domain in the interval 7–170 (LIWIDLEMTG…EDIRESVEEL (164 aa)). Y128 is an active-site residue.

Belongs to the oligoribonuclease family.

It localises to the cytoplasm. Its function is as follows. 3'-to-5' exoribonuclease specific for small oligoribonucleotides. This Hahella chejuensis (strain KCTC 2396) protein is Oligoribonuclease.